A 940-amino-acid chain; its full sequence is MFNLYRSSLKNLKLPNINNNIKSNLVIRSYTTNINGNIKNDDDNNKFYSLSQFPYPSGALHMGHVRVYTISDCIARLKRMQGYDVIHPMGWDAFGLPAENAAIDKQVSPSEWTNLNISSMRDQLKLLNFQFDWDRELSTCNKEYYRWTQEIFLRLLKSGLAYRKSATVNWDPIDQTVLANEQVDAQGRSWRSNAIVEKKEMKQWFYKITSMADRLTDDLDQLPGWSDEIKNMQKEWIGRSYGHLIEFQSCAQKPLSNITVFTTRAETIYGVSFLAISPHHSEINQIRANLINDEKRLELDQYLKEIQEIKNKMGTQEDVENLKTFNTGLTFYQPITKKYIPLILSNFVHADYGTGAVMGVPSHNRSDYQVAKQQNLKLLPVLGIEREQQQQQQQQQQQQQLEIEEECYDYSNTGKLINSGQDTGIEFKEFIKRLEDQQLIKRQTNYRIHDWLISRQRYWGTPIPIIVCEKCGDVPVPSDQLPVELPIDIQFTGKGNLLNQLDHWKNVKCPCCGSQATRETDTMDTFVDSSWYFLRFLDSKNSQSIFSSELVNRFMPIDVYVGGIEHAILHLLYSRFITKFLKDQQLIDHSEPFKVLLAQGLVKSPTYRDSITNKPIHPSNVEFKTIKSNESGKSQQQTINKLTGNQVSVTIEKMSKSKLNGIDPKEIIDKYGSDTLKTYILFKAPPEKSLDWDTQGIEGCKKWLTRINVSIQSFLNQFDVIEGKEQHQHQQQQHQQPLPSSEFNEQQSKEVKDILFETHLTMNKVTESIDKHSFNTGIAALMELSNTLQKSSPQIKLTKEYYQSLRALTLMLFPFSPIFSQIHWKSLIDDLPQSCKSFYSENYSSFEQQSYGNSNDNDVFNQRWPKPTPSALVRDFNSLVIQFDGKTKGVESIPTSITDFSNFVQSNSKYLNRFKDKTIDQIFIGTTKTGNSINFTFKKK.

The short motif at Pro54–His64 is the 'HIGH' region element. The 'KMSKS' region signature appears at Thr638–Leu642. Lys641 is an ATP binding site. Residues Lys724 to Asn744 are disordered.

Belongs to the class-I aminoacyl-tRNA synthetase family.

It localises to the mitochondrion. It catalyses the reaction tRNA(Leu) + L-leucine + ATP = L-leucyl-tRNA(Leu) + AMP + diphosphate. In Dictyostelium discoideum (Social amoeba), this protein is Leucine--tRNA ligase, mitochondrial (mleuS).